A 173-amino-acid polypeptide reads, in one-letter code: MPAPQKDGPRANRDIRGVRDVQLIDQDGQNRGVVPFFDALAMAEEVGLDLVEIAPNSVPPVCKFLDYGRFRFNEQKKQNEARKRQKTVEVKEIKLRPGIDKHDYDVKMKAVQRFFEEGDKVKVTLRFRGREIAHQDIGLRLLERVKQETQEVAKVESEPMLEGRQMIMILAPR.

The protein belongs to the IF-3 family. Monomer.

The protein localises to the cytoplasm. Its function is as follows. IF-3 binds to the 30S ribosomal subunit and shifts the equilibrium between 70S ribosomes and their 50S and 30S subunits in favor of the free subunits, thus enhancing the availability of 30S subunits on which protein synthesis initiation begins. The protein is Translation initiation factor IF-3 of Methylorubrum populi (strain ATCC BAA-705 / NCIMB 13946 / BJ001) (Methylobacterium populi).